The chain runs to 176 residues: Interleukin-19 (176 aa).

The first 24 residues, 1–24 (MKTQCASTWLLGMTLILCSVHIYS), serve as a signal peptide directing secretion. Disulfide bonds link C28–C120, C74–C126, and C75–C128. N-linked (GlcNAc...) asparagine glycosylation occurs at N56. N-linked (GlcNAc...) asparagine glycans are attached at residues N127 and N134.

The protein belongs to the IL-10 family.

The protein localises to the secreted. Its function is as follows. Cytokine that functions as an anti-inflammatory and proangiogenic factor. Polarizes adaptive immunity to an anti-inflammatory phenotype through induction of T-helper 2 responses by both down-regulation of IFN-gamma and up-regulation of IL4 and IL5. Produced by osteocytes, stimulates granulopoiesis and neutrophil formation. Exerts its biological effect through a receptor complex consisting of a heterodimer of IL20RA and IL20RB. In turn, activates the Janus kinase (JAK) and signal transducer and activator of transcription (STAT) pathway, and importantly, STAT3. The sequence is that of Interleukin-19 (Il19) from Mus musculus (Mouse).